A 394-amino-acid polypeptide reads, in one-letter code: Elongation factor Tu 1 (394 aa).

Residues 10-204 (KPHVNVGTIG…FLDSYIPEPE (195 aa)) form the tr-type G domain. The segment at 19–26 (GHVDHGKT) is G1. 19 to 26 (GHVDHGKT) is a binding site for GTP. Mg(2+) is bound at residue threonine 26. Positions 60-64 (GITIN) are G2. A G3 region spans residues 81-84 (DCPG). Residues 81–85 (DCPGH) and 136–139 (NKCD) each bind GTP. The interval 136–139 (NKCD) is G4. Positions 174-176 (SAL) are G5.

This sequence belongs to the TRAFAC class translation factor GTPase superfamily. Classic translation factor GTPase family. EF-Tu/EF-1A subfamily. As to quaternary structure, monomer.

It is found in the cytoplasm. The enzyme catalyses GTP + H2O = GDP + phosphate + H(+). In terms of biological role, GTP hydrolase that promotes the GTP-dependent binding of aminoacyl-tRNA to the A-site of ribosomes during protein biosynthesis. The polypeptide is Elongation factor Tu 1 (Shigella sonnei (strain Ss046)).